The chain runs to 362 residues: Phospho-N-acetylmuramoyl-pentapeptide-transferase (362 aa).

Helical transmembrane passes span 28–48 (GATV…IALL), 73–93 (TPTM…LLWA), 100–120 (VWIV…DDYL), 134–154 (VKLF…VLVS), 169–189 (TLLI…IVGS), 201–221 (GLAI…VYLV), 241–261 (LAVF…YNAP), 264–284 (MVFM…AIAV), 290–310 (LVLA…IVQV), and 339–359 (TVVV…LATL).

Belongs to the glycosyltransferase 4 family. MraY subfamily. It depends on Mg(2+) as a cofactor.

It is found in the cell inner membrane. It catalyses the reaction UDP-N-acetyl-alpha-D-muramoyl-L-alanyl-gamma-D-glutamyl-meso-2,6-diaminopimeloyl-D-alanyl-D-alanine + di-trans,octa-cis-undecaprenyl phosphate = di-trans,octa-cis-undecaprenyl diphospho-N-acetyl-alpha-D-muramoyl-L-alanyl-D-glutamyl-meso-2,6-diaminopimeloyl-D-alanyl-D-alanine + UMP. Its pathway is cell wall biogenesis; peptidoglycan biosynthesis. Catalyzes the initial step of the lipid cycle reactions in the biosynthesis of the cell wall peptidoglycan: transfers peptidoglycan precursor phospho-MurNAc-pentapeptide from UDP-MurNAc-pentapeptide onto the lipid carrier undecaprenyl phosphate, yielding undecaprenyl-pyrophosphoryl-MurNAc-pentapeptide, known as lipid I. This is Phospho-N-acetylmuramoyl-pentapeptide-transferase from Parvibaculum lavamentivorans (strain DS-1 / DSM 13023 / NCIMB 13966).